The chain runs to 97 residues: Phosphoribosyl-ATP pyrophosphatase (97 aa).

This sequence belongs to the PRA-PH family.

It localises to the cytoplasm. The catalysed reaction is 1-(5-phospho-beta-D-ribosyl)-ATP + H2O = 1-(5-phospho-beta-D-ribosyl)-5'-AMP + diphosphate + H(+). Its pathway is amino-acid biosynthesis; L-histidine biosynthesis; L-histidine from 5-phospho-alpha-D-ribose 1-diphosphate: step 2/9. The sequence is that of Phosphoribosyl-ATP pyrophosphatase from Methanoculleus marisnigri (strain ATCC 35101 / DSM 1498 / JR1).